The primary structure comprises 220 residues: Deoxyribose-phosphate aldolase (220 aa).

Asp89 functions as the Proton donor/acceptor in the catalytic mechanism. Residue Lys151 is the Schiff-base intermediate with acetaldehyde of the active site. The Proton donor/acceptor role is filled by Lys180.

It belongs to the DeoC/FbaB aldolase family. DeoC type 1 subfamily.

It localises to the cytoplasm. It carries out the reaction 2-deoxy-D-ribose 5-phosphate = D-glyceraldehyde 3-phosphate + acetaldehyde. It participates in carbohydrate degradation; 2-deoxy-D-ribose 1-phosphate degradation; D-glyceraldehyde 3-phosphate and acetaldehyde from 2-deoxy-alpha-D-ribose 1-phosphate: step 2/2. Catalyzes a reversible aldol reaction between acetaldehyde and D-glyceraldehyde 3-phosphate to generate 2-deoxy-D-ribose 5-phosphate. The sequence is that of Deoxyribose-phosphate aldolase from Staphylococcus saprophyticus subsp. saprophyticus (strain ATCC 15305 / DSM 20229 / NCIMB 8711 / NCTC 7292 / S-41).